Reading from the N-terminus, the 364-residue chain is Metalloendoproteinase 1-MMP (364 aa).

An N-terminal signal peptide occupies residues 1–28; sequence MSRNLIYRRNRALCFVLILFCFPYRFGA. Residues 29 to 149 constitute a propeptide, activation peptide; it reads RNTPEAEQST…NNDFLHTTAH (121 aa). A glycan (N-linked (GlcNAc...) asparagine) is linked at N49. The Cysteine switch signature appears at 128 to 135; that stretch reads PRCGVSDT. Zn(2+) is bound at residue C130. A Ca(2+)-binding site is contributed by D211. Residues H221 and D223 each contribute to the Zn(2+) site. Positions 228 and 229 each coordinate Ca(2+). H236 provides a ligand contact to Zn(2+). Residue G243 coordinates Ca(2+). A Zn(2+)-binding site is contributed by H246. Residues D248 and E251 each contribute to the Ca(2+) site. H275 is a binding site for Zn(2+). The active site involves E276. Positions 279 and 285 each coordinate Zn(2+). An N-linked (GlcNAc...) asparagine glycan is attached at N338. G339 carries GPI-anchor amidated glycine lipidation. A propeptide spans 340 to 364 (removed in mature form); it reads TVSHRFLSGNFIGYVLLVVGLILFL.

This sequence belongs to the peptidase M10A family. Matrix metalloproteinases (MMPs) subfamily. The cofactor is Ca(2+). Zn(2+) serves as cofactor. In terms of tissue distribution, mostly expressed in flowers, roots and stems, and, to a lower extent, in leaves.

The protein localises to the cell membrane. With respect to regulation, inhibited by human TIMP-1 and TIMP-2 and by the peptide hydroxamate inhibitor (BB-94). Repressed by acetohydroxamic acid (AHA). Matrix metalloproteinases (MMPs) or matrixins may play a role in the degradation and remodeling of the extracellular matrix (ECM) during development or in response to stresses. Can cleave myelin basic protein as well as fluorigenic peptide substrates, McaPLANvaDpaAR-NH(2) and McaPChaGNvaHADpa-NH(2) 4-fold more efficiently than McaPLGLDpaAR-NH(2) (QF24). Active on myelin basic protein (MBP) and, to some extent, on McaPLGLDpaAR-NH(2) (QF24) and beta-casein. The chain is Metalloendoproteinase 1-MMP from Arabidopsis thaliana (Mouse-ear cress).